A 251-amino-acid chain; its full sequence is SNAP25 homologous protein SNAP29 (251 aa).

The segment at 1–52 (MAPKNSSWNPFDDEKEAAKSFSLNPFDDDDDDKEVEKRFTSSLKPSGGKENQ) is disordered. A compositionally biased stretch (polar residues) spans 40 to 52 (TSSLKPSGGKENQ). The t-SNARE coiled-coil homology domain occupies 186-248 (KTQIAKQDEA…KQSNQRARYL (63 aa)).

Belongs to the SNAP-25 family.

Its subcellular location is the membrane. It localises to the cytoplasm. SNAREs, soluble N-ethylmaleimide-sensitive factor-attachment protein receptors, are essential proteins for fusion of cellular membranes. SNAREs localized on opposing membranes assemble to form a trans-SNARE complex, an extended, parallel four alpha-helical bundle that drives membrane fusion. The chain is SNAP25 homologous protein SNAP29 (SNAP29) from Arabidopsis thaliana (Mouse-ear cress).